Consider the following 581-residue polypeptide: Activating signal cointegrator 1 (581 aa).

N-acetylalanine is present on alanine 2. The disordered stretch occupies residues 97 to 118 (KSGDHLKRGRKKGRNRQEVPAF). The segment at 171–187 (CDCLGQKHKLINNCLIC) adopts a C4-type zinc-finger fold. Residues 200-300 (CLFCGTLVCT…ASDSNQWLSK (101 aa)) form a mediates interaction with DDRGK1 region. Serine 276 carries the post-translational modification Phosphoserine. Tyrosine 289 carries the post-translational modification Phosphotyrosine. The segment at 300–400 (KLERETLQKR…WVDHTGAASQ (101 aa)) is mediates interaction with UFL1. Glycyl lysine isopeptide (Lys-Gly) (interchain with G-Cter in UFM1) cross-links involve residues lysine 324, lysine 325, and lysine 334. Position 341 is a phosphoserine (serine 341). Residue lysine 367 forms a Glycyl lysine isopeptide (Lys-Gly) (interchain with G-Cter in UFM1) linkage. The 95-residue stretch at 437–531 (LSVHQPWASL…FKEQFPDISQ (95 aa)) folds into the ASCH domain.

Interacts with the thyroid hormone receptor/TR (via the ligand-binding domain); this interaction requires the presence of thyroid hormone. Interacts with the androgen receptor/AR; in an androgen, testosterone and dihydrotestosterone-dependent manner. Interacts with ESR1 (estrogen ligand-bound); competes with UFSP2. Interacts with UFSP2; competes with ligand-bound ESR1. Interacts with DDRGK1 and UFL1; the interaction with DDRGK1 is direct. Interacts with NCOA1. Interacts with EP300. Part of the ASC-1 complex, that contains TRIP4, ASCC1, ASCC2 and ASCC3. Identified in the RQT (ribosome quality control trigger) complex, that contains ASCC2, ASCC3 and TRIP4. Interacts with NEK6. Interacts with CSRP1. Interacts with ZCCHC4. In terms of processing, phosphorylated by NEK6. Polyufmylated by the UFM1-conjugating system composed of the enzymes UBA5, UFC1 and UFL1. Deufmylated by the protease UFSP2. Ufmylation of TRIP4 is promoted by ligand-bound nuclear receptors that compete with UFSP2 for interaction with TRIP4. Nuclear receptors-induced ufmylation promotes the recruitment of additional transcriptional coactivators like EP300 and NCOA1 and therefore the assembly of a coactivator complex facilitating nuclear receptor-mediated transcription.

It is found in the nucleus. It localises to the cytoplasm. Its subcellular location is the cytosol. The protein resides in the cytoskeleton. The protein localises to the microtubule organizing center. It is found in the centrosome. Its function is as follows. Transcription coactivator which associates with nuclear receptors, transcriptional coactivators including EP300, CREBBP and NCOA1, and basal transcription factors like TBP and TFIIA to facilitate nuclear receptors-mediated transcription. May thereby play an important role in establishing distinct coactivator complexes under different cellular conditions. Plays a role in thyroid hormone receptor and estrogen receptor transactivation. Also involved in androgen receptor transactivation. Plays a pivotal role in the transactivation of NF-kappa-B, SRF and AP1. Acts as a mediator of transrepression between nuclear receptor and either AP1 or NF-kappa-B. May play a role in the development of neuromuscular junction. May play a role in late myogenic differentiation. Also functions as part of the RQC trigger (RQT) complex that activates the ribosome quality control (RQC) pathway, a pathway that degrades nascent peptide chains during problematic translation. The protein is Activating signal cointegrator 1 of Homo sapiens (Human).